Here is a 166-residue protein sequence, read N- to C-terminus: Large ribosomal subunit protein uL10 (166 aa).

The protein belongs to the universal ribosomal protein uL10 family. Part of the ribosomal stalk of the 50S ribosomal subunit. The N-terminus interacts with L11 and the large rRNA to form the base of the stalk. The C-terminus forms an elongated spine to which L12 dimers bind in a sequential fashion forming a multimeric L10(L12)X complex.

In terms of biological role, forms part of the ribosomal stalk, playing a central role in the interaction of the ribosome with GTP-bound translation factors. The protein is Large ribosomal subunit protein uL10 of Pseudomonas putida (strain GB-1).